The following is a 147-amino-acid chain: Neocarzinostatin (147 aa).

A signal peptide spans 1–34; the sequence is MVPISIIRNRVAKVAVGSAAVLGLAVGFQTPAVA. Cystine bridges form between C71–C81 and C122–C127.

This sequence belongs to the neocarzinostatin family.

In terms of biological role, NCS has antibiotic activity (for Gram-positive bacteria) and antitumor activity (for certain mouse tumors). NCS binds non-covalently to a chromophore which is the cytotoxic and mutagenic component of the antibiotic. The chromophore binds to DNA as a weak intercalator and causes single- and double-strand breaks. The polypeptide is Neocarzinostatin (ncsA) (Streptomyces carzinostaticus).